A 230-amino-acid polypeptide reads, in one-letter code: Orotidine 5'-phosphate decarboxylase (230 aa).

Substrate is bound by residues Asp10, Lys32, 59-68, Thr119, Arg180, Gln189, Gly209, and Arg210; that span reads DLKYHDIPNT. The active-site Proton donor is Lys61.

This sequence belongs to the OMP decarboxylase family. Type 1 subfamily. Homodimer.

It catalyses the reaction orotidine 5'-phosphate + H(+) = UMP + CO2. Its pathway is pyrimidine metabolism; UMP biosynthesis via de novo pathway; UMP from orotate: step 2/2. In terms of biological role, catalyzes the decarboxylation of orotidine 5'-monophosphate (OMP) to uridine 5'-monophosphate (UMP). This chain is Orotidine 5'-phosphate decarboxylase, found in Haemophilus ducreyi (strain 35000HP / ATCC 700724).